Reading from the N-terminus, the 331-residue chain is Anthranilate phosphoribosyltransferase (331 aa).

5-phospho-alpha-D-ribose 1-diphosphate-binding positions include G81, 84-85 (GD), S89, 91-94 (NCST), 109-117 (KHGNRAVSS), and S121. G81 serves as a coordination point for anthranilate. S93 provides a ligand contact to Mg(2+). N112 contacts anthranilate. R167 is an anthranilate binding site. The Mg(2+) site is built by D226 and E227.

Belongs to the anthranilate phosphoribosyltransferase family. Homodimer. The cofactor is Mg(2+).

It catalyses the reaction N-(5-phospho-beta-D-ribosyl)anthranilate + diphosphate = 5-phospho-alpha-D-ribose 1-diphosphate + anthranilate. The protein operates within amino-acid biosynthesis; L-tryptophan biosynthesis; L-tryptophan from chorismate: step 2/5. In terms of biological role, catalyzes the transfer of the phosphoribosyl group of 5-phosphorylribose-1-pyrophosphate (PRPP) to anthranilate to yield N-(5'-phosphoribosyl)-anthranilate (PRA). The chain is Anthranilate phosphoribosyltransferase from Oleidesulfovibrio alaskensis (strain ATCC BAA-1058 / DSM 17464 / G20) (Desulfovibrio alaskensis).